The sequence spans 183 residues: GTP cyclohydrolase 1 (183 aa).

Positions 71, 74, and 142 each coordinate Zn(2+).

This sequence belongs to the GTP cyclohydrolase I family. In terms of assembly, toroid-shaped homodecamer, composed of two pentamers of five dimers.

The enzyme catalyses GTP + H2O = 7,8-dihydroneopterin 3'-triphosphate + formate + H(+). The protein operates within cofactor biosynthesis; 7,8-dihydroneopterin triphosphate biosynthesis; 7,8-dihydroneopterin triphosphate from GTP: step 1/1. This Leptospira borgpetersenii serovar Hardjo-bovis (strain JB197) protein is GTP cyclohydrolase 1.